A 217-amino-acid chain; its full sequence is Adenylate kinase (217 aa).

10–15 (GAGKGT) is a binding site for ATP. Residues 30–59 (STGDMLRAAVKAGTPLGLQAKDIMASGGLV) form an NMP region. AMP-binding positions include T31, R36, 57–59 (GLV), 85–88 (GFPR), and Q92. The interval 122–159 (GRRVHEASGRVYHIIHNAPRVEGHDDVTGEPLVQRPDD) is LID. ATP contacts are provided by residues R123 and 132–133 (VY). Positions 156 and 167 each coordinate AMP. G203 contributes to the ATP binding site.

The protein belongs to the adenylate kinase family. Monomer.

The protein resides in the cytoplasm. It catalyses the reaction AMP + ATP = 2 ADP. It participates in purine metabolism; AMP biosynthesis via salvage pathway; AMP from ADP: step 1/1. Catalyzes the reversible transfer of the terminal phosphate group between ATP and AMP. Plays an important role in cellular energy homeostasis and in adenine nucleotide metabolism. In Cellvibrio japonicus (strain Ueda107) (Pseudomonas fluorescens subsp. cellulosa), this protein is Adenylate kinase.